An 872-amino-acid polypeptide reads, in one-letter code: Alanine--tRNA ligase (872 aa).

Zn(2+) contacts are provided by His567, His571, Cys669, and His673.

Belongs to the class-II aminoacyl-tRNA synthetase family. Zn(2+) serves as cofactor.

The protein resides in the cytoplasm. The enzyme catalyses tRNA(Ala) + L-alanine + ATP = L-alanyl-tRNA(Ala) + AMP + diphosphate. In terms of biological role, catalyzes the attachment of alanine to tRNA(Ala) in a two-step reaction: alanine is first activated by ATP to form Ala-AMP and then transferred to the acceptor end of tRNA(Ala). Also edits incorrectly charged Ser-tRNA(Ala) and Gly-tRNA(Ala) via its editing domain. The chain is Alanine--tRNA ligase from Streptococcus agalactiae serotype V (strain ATCC BAA-611 / 2603 V/R).